Reading from the N-terminus, the 890-residue chain is DNA mismatch repair protein MutS (890 aa).

An ATP-binding site is contributed by 645 to 652; that stretch reads GPNMAGKS.

The protein belongs to the DNA mismatch repair MutS family.

Functionally, this protein is involved in the repair of mismatches in DNA. It is possible that it carries out the mismatch recognition step. This protein has a weak ATPase activity. This Rickettsia rickettsii (strain Iowa) protein is DNA mismatch repair protein MutS.